The chain runs to 86 residues: U15-lycotoxin-Ls1d (86 aa).

A signal peptide spans 1–20 (MNSKIFAVLFLLAFLSCVLS). One can recognise a WAP domain in the interval 21-66 (DQYCPKSSITACKKMNIRNDCCKDDDCTGGSWCCATPCGNFCKYPT). Disulfide bonds link Cys-24-Cys-54, Cys-32-Cys-58, Cys-41-Cys-53, Cys-42-Cys-80, and Cys-47-Cys-62.

The protein belongs to the venom protein 11 family. 01 (wap-1) subfamily. Post-translationally, contains 5 disulfide bonds. Expressed by the venom gland.

It is found in the secreted. Its function is as follows. Has antibacterial activity. The chain is U15-lycotoxin-Ls1d from Lycosa singoriensis (Wolf spider).